We begin with the raw amino-acid sequence, 481 residues long: uncharacterized protein (481 aa).

To M.tuberculosis RV2411c.

This is an uncharacterized protein from Synechocystis sp. (strain ATCC 27184 / PCC 6803 / Kazusa).